We begin with the raw amino-acid sequence, 625 residues long: Chaperone protein DnaK (625 aa).

Threonine 197 is modified (phosphothreonine; by autocatalysis). Residues 598–625 (AYAKEQGGTQQGTDTKKKDDDVIDAEVE) form a disordered region.

This sequence belongs to the heat shock protein 70 family.

In terms of biological role, acts as a chaperone. This chain is Chaperone protein DnaK, found in Helicobacter hepaticus (strain ATCC 51449 / 3B1).